The chain runs to 207 residues: Guanylate kinase (207 aa).

Positions 4-184 constitute a Guanylate kinase-like domain; sequence GILFIISAPS…AVNDLITIIT (181 aa). 11 to 18 contacts ATP; the sequence is APSGTGKS.

This sequence belongs to the guanylate kinase family.

Its subcellular location is the cytoplasm. It catalyses the reaction GMP + ATP = GDP + ADP. Its function is as follows. Essential for recycling GMP and indirectly, cGMP. The protein is Guanylate kinase (gmk) of Buchnera aphidicola subsp. Acyrthosiphon pisum (strain APS) (Acyrthosiphon pisum symbiotic bacterium).